A 353-amino-acid polypeptide reads, in one-letter code: Ribosomal RNA small subunit methyltransferase H (353 aa).

S-adenosyl-L-methionine is bound by residues 49–51, Asp68, Phe95, Asp126, and Gln133; that span reads GGH.

It belongs to the methyltransferase superfamily. RsmH family.

The protein localises to the cytoplasm. It carries out the reaction cytidine(1402) in 16S rRNA + S-adenosyl-L-methionine = N(4)-methylcytidine(1402) in 16S rRNA + S-adenosyl-L-homocysteine + H(+). Its function is as follows. Specifically methylates the N4 position of cytidine in position 1402 (C1402) of 16S rRNA. This Corynebacterium urealyticum (strain ATCC 43042 / DSM 7109) protein is Ribosomal RNA small subunit methyltransferase H.